Consider the following 283-residue polypeptide: Putative cuticle collagen 79 (283 aa).

Positions 59–283 (FKQQSSPPSP…ARSISKVAIQ (225 aa)) are disordered. 3 triple-helical region regions span residues 94–122 (GPPG…ENGG), 139–201 (GPRG…PGRK), and 204–269 (GEAG…DGAY). The span at 137 to 146 (PPGPRGPPGP) shows a compositional bias: pro residues. The segment covering 226-240 (TDGDDGVDGQPGDEG) has biased composition (acidic residues). A compositionally biased stretch (low complexity) spans 253–265 (PQGEQGTEGQPGT).

This sequence belongs to the cuticular collagen family. In terms of assembly, collagen polypeptide chains are complexed within the cuticle by disulfide bonds and other types of covalent cross-links.

Nematode cuticles are composed largely of collagen-like proteins. The cuticle functions both as an exoskeleton and as a barrier to protect the worm from its environment. The protein is Putative cuticle collagen 79 (col-79) of Caenorhabditis elegans.